Reading from the N-terminus, the 747-residue chain is Asparagine synthetase [glutamine-hydrolyzing] 2 (747 aa).

The active-site For GATase activity is the Cys-2. The 217-residue stretch at 2 to 218 (CGLAGIINLA…AGHYLEINLT (217 aa)) folds into the Glutamine amidotransferase type-2 domain. L-glutamine is bound by residues 52-56 (RLSIL), 77-79 (NGE), and Asp-100. 395–396 (SP) contacts ATP.

The protein belongs to the asparagine synthetase family.

It carries out the reaction L-aspartate + L-glutamine + ATP + H2O = L-asparagine + L-glutamate + AMP + diphosphate + H(+). It participates in amino-acid biosynthesis; L-asparagine biosynthesis; L-asparagine from L-aspartate (L-Gln route): step 1/1. The chain is Asparagine synthetase [glutamine-hydrolyzing] 2 (asnH) from Bacillus subtilis (strain 168).